The following is a 418-amino-acid chain: Phosphoglycerate kinase (418 aa).

Residues Val23, Asp24, Phe25, Asn26, Gln39, Arg40, Ser63, His64, Gly66, Arg67, Leu122, Arg123, His170, and Arg171 each coordinate (2R)-3-phosphoglycerate. Gly214 is a binding site for ADP. Gly214 lines the CDP pocket. AMP is bound by residues Ala215 and Lys216. Residue Ala215 coordinates ATP. A Mg(2+)-binding site is contributed by Ala215. Asp219 contributes to the CDP binding site. Asp219 lines the Mg(2+) pocket. AMP is bound at residue Lys220. Lys220 contributes to the ATP binding site. Gly238 contributes to the ADP binding site. Residue Gly238 participates in CDP binding. Residues Gly239 and Gly313 each contribute to the AMP site. Residues Gly239 and Gly313 each coordinate ATP. 3 residues coordinate CDP: Gly338, Ala340, and Phe343. Phe343 is a binding site for ADP. Glu344 serves as a coordination point for AMP. ATP is bound by residues Glu344, Asp375, and Thr376. Position 375 (Asp375) interacts with Mg(2+).

This sequence belongs to the phosphoglycerate kinase family. Monomer. Mg(2+) serves as cofactor.

The protein localises to the cytoplasm. Its subcellular location is the mitochondrion. It catalyses the reaction (2R)-3-phosphoglycerate + ATP = (2R)-3-phospho-glyceroyl phosphate + ADP. It participates in carbohydrate degradation; glycolysis; pyruvate from D-glyceraldehyde 3-phosphate: step 2/5. Its function is as follows. Catalyzes one of the two ATP producing reactions in the glycolytic pathway via the reversible conversion of 1,3-diphosphoglycerate to 3-phosphoglycerate. Both L- and D- forms of purine and pyrimidine nucleotides can be used as substrates, but the activity is much lower on pyrimidines. Negatively regulates the biosynthesis of acetyl-CoA from pyruvate in the mitochondrion. The chain is Phosphoglycerate kinase (pgk-1) from Neurospora crassa (strain ATCC 24698 / 74-OR23-1A / CBS 708.71 / DSM 1257 / FGSC 987).